A 386-amino-acid chain; its full sequence is S-adenosylmethionine synthase (386 aa).

Residue H16 coordinates ATP. Position 18 (D18) interacts with Mg(2+). Residue E44 participates in K(+) binding. Positions 57 and 100 each coordinate L-methionine. The tract at residues 100–110 (QSRDITQGVDR) is flexible loop. ATP contacts are provided by residues 165–167 (DAK), D240, 246–247 (RK), A263, and K267. Residue D240 participates in L-methionine binding. L-methionine is bound at residue K271.

The protein belongs to the AdoMet synthase family. As to quaternary structure, homotetramer; dimer of dimers. Mg(2+) serves as cofactor. The cofactor is K(+).

It localises to the cytoplasm. The catalysed reaction is L-methionine + ATP + H2O = S-adenosyl-L-methionine + phosphate + diphosphate. It functions in the pathway amino-acid biosynthesis; S-adenosyl-L-methionine biosynthesis; S-adenosyl-L-methionine from L-methionine: step 1/1. Catalyzes the formation of S-adenosylmethionine (AdoMet) from methionine and ATP. The overall synthetic reaction is composed of two sequential steps, AdoMet formation and the subsequent tripolyphosphate hydrolysis which occurs prior to release of AdoMet from the enzyme. This Francisella tularensis subsp. tularensis (strain FSC 198) protein is S-adenosylmethionine synthase.